The sequence spans 1058 residues: Receptor-type guanylate cyclase gcy-22 (1058 aa).

The N-terminal stretch at 1–23 (MSFISKCFICLLFSTYFLPPVNS) is a signal peptide. At 25–470 (VLQVGFLAAN…PKSFTDQYLA (446 aa)) the chain is on the extracellular side. N-linked (GlcNAc...) asparagine glycans are attached at residues asparagine 36, asparagine 73, asparagine 201, asparagine 215, asparagine 277, asparagine 302, asparagine 324, asparagine 350, and asparagine 386. A helical transmembrane segment spans residues 471–491 (IILGCTAAALVLIIAVISTIV). Over 492–1058 (FLVRSKRQEE…IEAKENGESI (567 aa)) the chain is Cytoplasmic. The 309-residue stretch at 501-809 (EERLNQLWQV…SSNLMDHVFN (309 aa)) folds into the Protein kinase domain. A coiled-coil region spans residues 811-840 (LEQYASNLEDEVQARMKELTEEKKRSDVLL). A Guanylate cyclase domain is found at 867–997 (TIFFSDVVSF…DSVNTASRME (131 aa)).

The protein belongs to the adenylyl cyclase class-4/guanylyl cyclase family. In terms of tissue distribution, expression in ASER neuron begins at an early larval stage and is maintained in the adult.

It is found in the cell membrane. It carries out the reaction GTP = 3',5'-cyclic GMP + diphosphate. Guanylate cyclase involved in the production of the second messenger cGMP. Regulates chemotaxis responses toward Li(1-), Mg(2+), Cl(1-), Br(1)- and I(1-) salt ions and methionine in ASE right (ASER) sensory neuron. May regulate ASER neuronal activity such as axon sprouting and calcium responses to changes in salt concentrations. The polypeptide is Receptor-type guanylate cyclase gcy-22 (Caenorhabditis elegans).